The following is a 422-amino-acid chain: Adhesin YadA (422 aa).

The N-terminal stretch at 1-25 (MTKDFKISVSAALISALFSSPYAFA) is a signal peptide. A surface exposed passenger domain region spans residues 26 to 330 (NNDEVHFTAV…KKAIRESNQY (305 aa)). A coiled-coil region spans residues 206-236 (VNVAQLKKEIEKTQVNANKKSAEVLGIANNY). The tract at residues 331-368 (TDHKFRQLDNRLDKLDTRVDKGLASSAALNSLFQPYGV) is outer membrane translocation of the passenger domain. 4 beta stranded membrane passes run 369 to 379 (GKVNFTAGVGG), 383 to 394 (SQALAIGSGYRV), 401 to 407 (KAGVAYA), and 411 to 422 (DVMYNASFNIEW). Residues 369–422 (GKVNFTAGVGGYRSSQALAIGSGYRVNESVALKAGVAYAGSSDVMYNASFNIEW) form a translocator domain region.

The protein belongs to the autotransporter-2 (AT-2) (TC 1.B.40) family. As to quaternary structure, homotrimer; trimers are very stable, not disrupted by heating at 95 degrees Celsius for 10 minutes in SDS sample buffer.

The protein resides in the cell surface. The protein localises to the cell outer membrane. Functionally, collagen-binding outer membrane protein forming a fibrillar matrix on the bacterial cell surface and phagocytosis resistance. Promotes initial attachment and invasion of eukaryotic cells. Also protects the bacteria by being responsible for agglutination, serum resistance and complement inactivation. Gly-389 plays an important role in this protein; replacing it with increasingly large polar residues decreases expression levels and trimer stability. Residues larger than Ser (Thr, Asn or His) significantly decrease serume resistance and bacterial autoagglution without affecting adhesion to host cells or host cell cytokine production. This Yersinia enterocolitica serotype O:8 / biotype 1B (strain NCTC 13174 / 8081) protein is Adhesin YadA.